The sequence spans 743 residues: Inhibitor of nuclear factor kappa-B kinase subunit alpha (743 aa).

The region spanning 15-300 (WDMKDRLGTG…MDCGRPQCFV (286 aa)) is the Protein kinase domain. ATP-binding positions include 21 to 29 (LGTGGFGNV) and lysine 44. Aspartate 144 acts as the Proton acceptor in catalysis. A leucine-zipper region spans residues 453 to 474 (LLRFNTNLTKMKNTMVSASQQL). The interval 736–741 (LDFSWL) is NEMO-binding.

Belongs to the protein kinase superfamily. Ser/Thr protein kinase family. I-kappa-B kinase subfamily.

Its subcellular location is the cytoplasm. The protein resides in the nucleus. It catalyses the reaction L-seryl-[I-kappa-B protein] + ATP = O-phospho-L-seryl-[I-kappa-B protein] + ADP + H(+). With respect to regulation, activated when phosphorylated and inactivated when dephosphorylated. In terms of biological role, phosphorylates inhibitors of NF-kappa-B thus leading to the dissociation of the inhibitor/NF-kappa-B complex and ultimately the degradation of the inhibitor. Phosphorylates 'Ser-10' of histone H3 at NF-kappa-B-regulated promoters during inflammatory responses triggered by cytokines. The protein is Inhibitor of nuclear factor kappa-B kinase subunit alpha (chuk) of Xenopus tropicalis (Western clawed frog).